A 129-amino-acid polypeptide reads, in one-letter code: Small ribosomal subunit protein uS12 (129 aa).

The tract at residues Met1–Glu25 is disordered. Over residues Phe10–Lys20 the composition is skewed to basic residues. Asp89 is modified (3-methylthioaspartic acid). Residues Gly109–Lys129 form a disordered region.

The protein belongs to the universal ribosomal protein uS12 family. In terms of assembly, part of the 30S ribosomal subunit. Contacts proteins S8 and S17. May interact with IF1 in the 30S initiation complex.

In terms of biological role, with S4 and S5 plays an important role in translational accuracy. Its function is as follows. Interacts with and stabilizes bases of the 16S rRNA that are involved in tRNA selection in the A site and with the mRNA backbone. Located at the interface of the 30S and 50S subunits, it traverses the body of the 30S subunit contacting proteins on the other side and probably holding the rRNA structure together. The combined cluster of proteins S8, S12 and S17 appears to hold together the shoulder and platform of the 30S subunit. The chain is Small ribosomal subunit protein uS12 from Rickettsia peacockii (strain Rustic).